A 186-amino-acid polypeptide reads, in one-letter code: Hydra actinoporin-like toxin 6 (186 aa).

An N-terminal signal peptide occupies residues 1-21 (MLVYVCLVVILIQLPFGAAGG). The Cell attachment site motif lies at 158–160 (RAG).

This sequence belongs to the actinoporin family. HALT subfamily. As to quaternary structure, octamer or nonamer in membranes. Monomer in the soluble state. In vitro, interacts with folate receptor alpha (of target organism). As to expression, expressed female germline during oogenesis.

The protein resides in the nematocyst. It is found in the secreted. The protein localises to the target cell membrane. In terms of biological role, pore-forming protein that forms hydrophilic pores and causes cytolysis. Compared to equinatoxin-2 (AC P61914), it reveals lower cytolysis activity (5-12-fold difference, tested on erythrocytes), a larger pore size (probably 2-3 nm) and different affinity to membrane lipids (100-fold lower affinity to sphingomyelin). Binds to sulfatides. Shows cytolytic activity on HeLa cells, with a different potency than its paralogs (from most potent to less potent: HALT-4&gt;HALT-6~HALT-1&gt;HALT-3&gt;HALT-7&gt;HALT-2). Pore formation is a multi-step process that involves specific recognition of membrane lipid by a protein aromatic residues rich region, firm binding to the membrane (mainly driven by hydrophobic interactions) accompanied by the transfer of the N-terminal region to the lipid-water interface and finally pore formation after oligomerization of monomers. In vitro, binds to the folate receptor alpha (FOLR1), a GPI-anchored membrane protein that plays a major role in the uptake of folate/folic acid into cells via endocytosis, suggesting a possible involvement of this receptor in the mechanism of HALT-1-induced cell lysis. In vivo, does not cause visible paralysis in larvae of the blowfly Sarcophaga faculata, the most common arthropod prey of Hydra. The protein is Hydra actinoporin-like toxin 6 of Hydra vulgaris (Hydra).